The chain runs to 962 residues: Exportin-T (962 aa).

Met-1 is modified (N-acetylmethionine). An N6-acetyllysine modification is found at Lys-634.

As to quaternary structure, found in a complex with XPOT, Ran and tRNA. Probably found in a complex with nucleoporins. Interacts with Ran and tRNA in a GTP-dependent manner.

Its subcellular location is the nucleus. The protein resides in the cytoplasm. In terms of biological role, mediates the nuclear export of aminoacylated tRNAs. In the nucleus binds to tRNA and to the GTPase Ran in its active GTP-bound form. Docking of this trimeric complex to the nuclear pore complex (NPC) is mediated through binding to nucleoporins. Upon transit of a nuclear export complex into the cytoplasm, disassembling of the complex and hydrolysis of Ran-GTP to Ran-GDP (induced by RANBP1 and RANGAP1, respectively) cause release of the tRNA from the export receptor. XPOT then return to the nuclear compartment and mediate another round of transport. The directionality of nuclear export is thought to be conferred by an asymmetric distribution of the GTP- and GDP-bound forms of Ran between the cytoplasm and nucleus. In Pongo abelii (Sumatran orangutan), this protein is Exportin-T (XPOT).